Reading from the N-terminus, the 377-residue chain is Chaperone protein DnaJ (377 aa).

Residues 4-69 (DYYEALGVTR…QKRAAYDRFG (66 aa)) enclose the J domain. A CR-type zinc finger spans residues 135 to 213 (GKTAQIRVPT…CHGQGRVTQE (79 aa)). Zn(2+)-binding residues include cysteine 148, cysteine 151, cysteine 165, cysteine 168, cysteine 187, cysteine 190, cysteine 201, and cysteine 204. CXXCXGXG motif repeat units lie at residues 148–155 (CDECSGSG), 165–172 (CTMCSGSG), 187–194 (CPGCNGRG), and 201–208 (CEKCHGQG).

The protein belongs to the DnaJ family. In terms of assembly, homodimer. The cofactor is Zn(2+).

The protein localises to the cytoplasm. Participates actively in the response to hyperosmotic and heat shock by preventing the aggregation of stress-denatured proteins and by disaggregating proteins, also in an autonomous, DnaK-independent fashion. Unfolded proteins bind initially to DnaJ; upon interaction with the DnaJ-bound protein, DnaK hydrolyzes its bound ATP, resulting in the formation of a stable complex. GrpE releases ADP from DnaK; ATP binding to DnaK triggers the release of the substrate protein, thus completing the reaction cycle. Several rounds of ATP-dependent interactions between DnaJ, DnaK and GrpE are required for fully efficient folding. Also involved, together with DnaK and GrpE, in the DNA replication of plasmids through activation of initiation proteins. The sequence is that of Chaperone protein DnaJ from Brucella ovis (strain ATCC 25840 / 63/290 / NCTC 10512).